The sequence spans 431 residues: Ribosomal protein uS12 methylthiotransferase RimO (431 aa).

The 117-residue stretch at 4 to 120 folds into the MTTase N-terminal domain; sequence LKLYVIVLGC…LAESINKTKK (117 aa). [4Fe-4S] cluster contacts are provided by C13, C49, C83, C150, C154, and C157. A Radical SAM core domain is found at 136 to 365; sequence DSDLPYAYVK…MEVQAEISFL (230 aa). One can recognise a TRAM domain in the interval 368-431; sequence QRLVGKVIDV…TYDLEGELVE (64 aa).

It belongs to the methylthiotransferase family. RimO subfamily. Requires [4Fe-4S] cluster as cofactor.

It localises to the cytoplasm. The enzyme catalyses L-aspartate(89)-[ribosomal protein uS12]-hydrogen + (sulfur carrier)-SH + AH2 + 2 S-adenosyl-L-methionine = 3-methylsulfanyl-L-aspartate(89)-[ribosomal protein uS12]-hydrogen + (sulfur carrier)-H + 5'-deoxyadenosine + L-methionine + A + S-adenosyl-L-homocysteine + 2 H(+). Its function is as follows. Catalyzes the methylthiolation of an aspartic acid residue of ribosomal protein uS12. This chain is Ribosomal protein uS12 methylthiotransferase RimO, found in Fervidobacterium nodosum (strain ATCC 35602 / DSM 5306 / Rt17-B1).